Consider the following 477-residue polypeptide: UDP-N-acetylmuramate--L-alanine ligase (477 aa).

120–126 is an ATP binding site; it reads GSHGKTT.

This sequence belongs to the MurCDEF family.

Its subcellular location is the cytoplasm. It carries out the reaction UDP-N-acetyl-alpha-D-muramate + L-alanine + ATP = UDP-N-acetyl-alpha-D-muramoyl-L-alanine + ADP + phosphate + H(+). The protein operates within cell wall biogenesis; peptidoglycan biosynthesis. Functionally, cell wall formation. The protein is UDP-N-acetylmuramate--L-alanine ligase of Rickettsia canadensis (strain McKiel).